We begin with the raw amino-acid sequence, 1278 residues long: Sterol regulatory element-binding protein cleavage-activating protein (1278 aa).

The Cytoplasmic segment spans residues 1 to 18 (MTLTERLREKISQAFYNH). The chain crosses the membrane as a helical span at residues 19–39 (GLFCASYPIPIILFTGLCILA). Over 40–279 (CCYPLLKLPL…SLVHVHFKEE (240 aa)) the chain is Lumenal. Positions 46–284 (KLPLPGTGPV…HFKEEIGIAE (239 aa)) are loop-1. The interval 60 to 80 (PVKDYSPPPLTSDHKPGEPNE) is disordered. Residue asparagine 263 is glycosylated (N-linked (GlcNAc...) asparagine). The helical transmembrane segment at 280–300 (IGIAELIPLVTTYIILFAYIY) threads the bilayer. The SSD domain occupies 284-442 (ELIPLVTTYI…MLFFTTVLSI (159 aa)). The Cytoplasmic portion of the chain corresponds to 301 to 312 (FSTRKIDMVKSK). A helical membrane pass occupies residues 313–333 (WGLALAAVVTVLSSLLMSVGL). At 334-344 (CTLFGLTPTLN) the chain is on the lumenal side. A helical membrane pass occupies residues 345–365 (GGEIFPYLVVVIGLENVLVLT). Residues 366 to 401 (KSVVSTPVDLEVKLRIAQGLSSESWSIMKNMATELG) are Cytoplasmic-facing. The helical transmembrane segment at 402–422 (IVLIGYFTLVPAIQEFCLFAV) threads the bilayer. Position 423 (valine 423) is a topological domain, lumenal. A helical membrane pass occupies residues 424 to 444 (GLVSDFFLQMLFFTTVLSIDI). Residues 445-518 (RRMELADLNK…FLARTRLAQR (74 aa)) lie on the Cytoplasmic side of the membrane. Positions 447-452 (MELADL) match the ER export signal motif. Glycyl lysine isopeptide (Lys-Gly) (interchain with G-Cter in ubiquitin) cross-links involve residues lysine 454 and lysine 466. A helical transmembrane segment spans residues 519–539 (LIMAGTVVWIGILVYTDPAGL). A loop-7 region spans residues 535–710 (DPAGLRTYLA…QAQRDLTLYK (176 aa)). Residues 540–707 (RTYLAAQVTE…GTAQAQRDLT (168 aa)) are Lumenal-facing. Positions 581-618 (PPDASKLPENQTLPGEPPEPGGLAEGVHDSPAPEVTWG) are disordered. Asparagine 590 and asparagine 641 each carry an N-linked (GlcNAc...) asparagine glycan. The disordered stretch occupies residues 668–696 (EGRHPQDGRSAWPPPRPGQGGLWEAGPKG). Residues 708-728 (LYKVAALGLASGIVLVLLLLC) traverse the membrane as a helical segment. Residues 729–1278 (LYRVLCPRNY…YVPSVLEKLD (550 aa)) lie on the Cytoplasmic side of the membrane. Positions 731–1278 (RVLCPRNYGQ…YVPSVLEKLD (548 aa)) are interaction with SREBF2. A WD 1 repeat occupies 771–811 (VLRGHLMDIECLASDGMLLVSCCLAGHVCVWDAQTGDCLTR). A phosphoserine mark is found at serine 821, serine 837, serine 850, serine 905, and serine 935. Residues 834 to 904 (ERLSDGGKGG…RYRAGRRAQD (71 aa)) form a disordered region. WD repeat units follow at residues 951 to 1001 (PPEK…LRCS) and 1004 to 1041 (EVSS…ALSP). Position 1050 is an omega-N-methylarginine (arginine 1050). WD repeat units follow at residues 1076–1113 (AHQK…CLFT), 1116–1154 (GHSG…RVSH), 1157–1194 (AHRG…KLYS), and 1196–1234 (QQDL…LLQT).

The protein belongs to the WD repeat SCAP family. Membrane region forms a homotetramer. Component of the SCAP-SREBP complex (composed of SCAP and SREBF1/SREBP1 or SREBF2/SREBP2); interacts with SREBF1/SREBP1 or SREBF2/SREBP2 through its C-terminal cytoplasmic domain. Forms a ternary complex with INSIG1 or INSIG2 through its transmembrane domains at high sterol concentrations. Interacts with PAQR3; the interaction anchors the SCAP-SREBP complex to the Golgi apparatus in low cholesterol conditions. Interacts with the SEC23-SEC24 complex in a SAR1-GTP-dependent manner through an ER export signal in its third cytoplasmic loop. Interacts with RNF139; the interaction inhibits the interaction of SCAP with SEC24B and hampering the ER to Golgi transport of the SCAP-SREBP complex. Interacts with SPRING1. In terms of processing, ubiquitinated at Lys-454 and Lys-466. RNF145 triggers ubiquitination of SCAP, likely inhibiting SCAP-SREBP complex transport to the Golgi apparatus and the subsequent processing/maturation of SREBF2/SREBP2.

The protein resides in the endoplasmic reticulum membrane. Its subcellular location is the golgi apparatus membrane. The protein localises to the cytoplasmic vesicle. It localises to the COPII-coated vesicle membrane. Escort protein required for cholesterol as well as lipid homeostasis. Regulates export of the SCAP-SREBP complex from the endoplasmic reticulum to the Golgi upon low cholesterol, thereby regulating the processing of sterol regulatory element-binding proteins (SREBPs) SREBF1/SREBP1 and SREBF2/SREBP2. At high sterol concentrations, formation of a ternary complex with INSIG (INSIG1 or INSIG2) leads to mask the ER export signal in SCAP, promoting retention of the complex in the endoplasmic reticulum. Low sterol concentrations trigger release of INSIG, a conformational change in the SSD domain of SCAP, unmasking of the ER export signal, promoting recruitment into COPII-coated vesicles and transport of the SCAP-SREBP to the Golgi: in the Golgi, SREBPs are then processed, releasing the transcription factor fragment of SREBPs from the membrane, its import into the nucleus and up-regulation of LDLR, INSIG1 and the mevalonate pathway. Binds cholesterol via its SSD domain. The sequence is that of Sterol regulatory element-binding protein cleavage-activating protein from Bos taurus (Bovine).